Reading from the N-terminus, the 145-residue chain is Class I hydrophobin 1 (145 aa).

The first 18 residues, 1–18 (MYASVIIYTLVALCGVMS), serve as a signal peptide directing secretion. 4 cysteine pairs are disulfide-bonded: Cys88/Cys118, Cys95/Cys112, Cys96/Cys106, and Cys119/Cys128. Asn108 is a glycosylation site (N-linked (GlcNAc...) asparagine).

Belongs to the fungal hydrophobin family. Self-assembles to form functional amyloid fibrils called rodlets. Self-assembly into fibrillar rodlets occurs spontaneously at hydrophobic:hydrophilic interfaces and the rodlets further associate laterally to form amphipathic monolayers.

It is found in the secreted. The protein localises to the cell wall. Its function is as follows. Aerial growth, conidiation, and dispersal of filamentous fungi in the environment rely upon a capability of their secreting small amphipathic proteins called hydrophobins (HPBs) with low sequence identity. Class I can self-assemble into an outermost layer of rodlet bundles on aerial cell surfaces, conferring cellular hydrophobicity that supports fungal growth, development and dispersal; whereas Class II form highly ordered films at water-air interfaces through intermolecular interactions but contribute nothing to the rodlet structure. Hyd1 is a class I hydrophobin that is involved in plant root attachment and colonization, and that might also protect the growing hyphae from locally synthesized plant defense compounds during the first stages of cucumber interaction, allowing this opportunistic, non-pathogenic fungus to colonize the intercellular spaces of the plant root. This is Class I hydrophobin 1 from Trichoderma asperellum (Filamentous fungus).